Reading from the N-terminus, the 483-residue chain is Cysteine--tRNA ligase (483 aa).

C29 is a binding site for Zn(2+). Residues 31 to 41 carry the 'HIGH' region motif; that stretch reads ITVYDYCHLGH. Zn(2+) contacts are provided by C215, H240, and E244. Positions 272–276 match the 'KMSKS' region motif; sequence KMSKS. K275 lines the ATP pocket.

This sequence belongs to the class-I aminoacyl-tRNA synthetase family. Monomer. The cofactor is Zn(2+).

The protein resides in the cytoplasm. It carries out the reaction tRNA(Cys) + L-cysteine + ATP = L-cysteinyl-tRNA(Cys) + AMP + diphosphate. The chain is Cysteine--tRNA ligase (cysS) from Synechocystis sp. (strain ATCC 27184 / PCC 6803 / Kazusa).